The following is a 325-amino-acid chain: Olfactory receptor 14L1 (325 aa).

The Extracellular segment spans residues 1–43; that stretch reads MAQFNKNQLIACRRNGTTTSDFNQTEVAEFFLMGFSNSWDIQI. A helical membrane pass occupies residues 44–64; sequence VHAALFFLVYLAAVIGNLLII. At 65–72 the chain is on the cytoplasmic side; sequence ILTTLDVH. Residues 73-93 traverse the membrane as a helical segment; sequence LQTPMYFFLRNLSFLDFCYIS. Over 94 to 117 the chain is Extracellular; it reads VTIPKSIVSSLTHDTSISFFGCAL. A helical transmembrane segment spans residues 118 to 138; sequence QAFFFMDLATTEVAILTVMSY. The Cytoplasmic segment spans residues 139–151; it reads DRYMAICRPLHYE. Residues 152-172 traverse the membrane as a helical segment; that stretch reads VIINQGVCLRMMAMSWLSGVI. Residues 173 to 214 are Extracellular-facing; that stretch reads CGFMHVIATFSLPFCGRNRIRQFFCNIPQLLSLLDPKVITIE. A helical membrane pass occupies residues 215-235; it reads IGVMVFGTSLVIISFVVITLS. Residues 236–255 lie on the Cytoplasmic side of the membrane; the sequence is YMYIFSVIMRIPSKEGRSKT. The helical transmembrane segment at 256 to 276 threads the bilayer; the sequence is FSTCIPHLVVVTLFMISGSIA. Topologically, residues 277-289 are extracellular; that stretch reads YVKPISNSPPVLD. Residues 290 to 310 traverse the membrane as a helical segment; the sequence is VFLSAFYTVVPPTLNPVIYSL. The Cytoplasmic segment spans residues 311 to 325; it reads RNRDMKAALRRQCGP.

This sequence belongs to the G-protein coupled receptor 1 family.

It localises to the cell membrane. Functionally, odorant receptor. This chain is Olfactory receptor 14L1, found in Homo sapiens (Human).